The sequence spans 155 residues: SsrA-binding protein (155 aa).

It belongs to the SmpB family.

The protein localises to the cytoplasm. Functionally, required for rescue of stalled ribosomes mediated by trans-translation. Binds to transfer-messenger RNA (tmRNA), required for stable association of tmRNA with ribosomes. tmRNA and SmpB together mimic tRNA shape, replacing the anticodon stem-loop with SmpB. tmRNA is encoded by the ssrA gene; the 2 termini fold to resemble tRNA(Ala) and it encodes a 'tag peptide', a short internal open reading frame. During trans-translation Ala-aminoacylated tmRNA acts like a tRNA, entering the A-site of stalled ribosomes, displacing the stalled mRNA. The ribosome then switches to translate the ORF on the tmRNA; the nascent peptide is terminated with the 'tag peptide' encoded by the tmRNA and targeted for degradation. The ribosome is freed to recommence translation, which seems to be the essential function of trans-translation. The protein is SsrA-binding protein of Geobacillus sp. (strain WCH70).